Reading from the N-terminus, the 710-residue chain is Choline transporter-like protein 5 (710 aa).

A disordered region spans residues 1-21 (MARKRKPPSSQGDPRRYDPDF). At 1–32 (MARKRKPPSSQGDPRRYDPDFQGPTAKRTCTD) the chain is on the cytoplasmic side. The helical transmembrane segment at 33-53 (VLCCLIFLLFILGYVLLGLLA) threads the bilayer. The Extracellular segment spans residues 54 to 236 (WAHGDPRKMA…KLLEDYATSW (183 aa)). N-linked (GlcNAc...) asparagine glycans are attached at residues N82 and N184. The chain crosses the membrane as a helical span at residues 237–257 (KWILIGLTVAMALSWTFLILL). The Cytoplasmic segment spans residues 258–260 (RFT). The helical transmembrane segment at 261 to 281 (AGFLFWFFIFGVLGIIGYGIW) threads the bilayer. Residues 282 to 319 (YCFLEYSSIQQRPQSTFWMYGFGIQRRVNMFFHLKETW) are Extracellular-facing. Residues 320 to 340 (FSMMIILSAIEIIIIIVLIFL) traverse the membrane as a helical segment. Residues 341–345 (RTRIQ) are Cytoplasmic-facing. A helical transmembrane segment spans residues 346–366 (VAIILLQEGSKAISYLPSALI). The Extracellular segment spans residues 367–368 (YP). The helical transmembrane segment at 369–389 (VLTFILLSICISYWAVTAVFL) threads the bilayer. At 390-454 (ATSGVPIFKV…NYILTFQVYN (65 aa)) the chain is on the cytoplasmic side. A helical membrane pass occupies residues 455 to 475 (LFAFLWLINFVIALGQCALAG). The Extracellular segment spans residues 476–509 (AFASYYWAMKKPDDIPPYPLFTAFGRAVRYHTGS). The chain crosses the membrane as a helical span at residues 510–530 (LAFGSLILASVQMFKVIVEYL). Topologically, residues 531-604 (DRRLKKAQNS…KVTVTDEVTY (74 aa)) are cytoplasmic. The chain crosses the membrane as a helical span at residues 605 to 625 (FVLLLGKVLVSGIVGVLAFLL). Residues 626–643 (FTERLQIIVDGPTTLNYY) are Extracellular-facing. A helical transmembrane segment spans residues 644-664 (WVPFLTLVFGSYMIAHGFFSV). Topologically, residues 665 to 710 (YSMCVETIFICFLEDLERNEGSPSRPYFVTPALMNILLEQGKIKKQ) are cytoplasmic.

It belongs to the CTL (choline transporter-like) family.

The protein localises to the cell membrane. The enzyme catalyses choline(out) + n H(+)(in) = choline(in) + n H(+)(out). In terms of biological role, choline/H+ antiporter. The polypeptide is Choline transporter-like protein 5 (Slc44a5) (Mus musculus (Mouse)).